A 637-amino-acid chain; its full sequence is Protein RRP6-like 1 (637 aa).

The region spanning 118 to 283 (VEEVKDLEDL…YIYDVMRMEL (166 aa)) is the 3'-5' exonuclease domain. One can recognise an HRDC domain in the interval 334–414 (NAVQLSIVAG…RRSMQNAAAF (81 aa)). Positions 553-565 (VDDDDDDDDDESY) are enriched in acidic residues. Residues 553-624 (VDDDDDDDDD…EDMRRRSEKH (72 aa)) form a disordered region. Over residues 580–598 (ETPSKGSPSLTQKPKTCNT) the composition is skewed to polar residues. Acidic residues predominate over residues 602-614 (VLDDDDDSESRED).

The protein localises to the nucleus. The protein resides in the nucleoplasm. In terms of biological role, acts as an important epigenetic regulator through multiple silencing mechanisms. Involved in transcriptional gene silencing (TGS). Plays a role for DNA methylation in the RNA-directed DNA methylation (RdDM) pathway. Contributes to the methylation status of the retrotransposon SN1. Required for DNA methylation only at a subset of RdDM target loci. Plays a regulatory role in RdDM through retention of non-coding RNAs (ncRNAs) in normal cells. Helps to retain Pol V-transcribed RNAs in chromatin to enable their scaffold function and is required for genome-wide Pol IV-dependent siRNA (24 nt siRNA) production that may involve retention of Pol IV transcripts. Involved in association with RRP6L2 in the silencing of the solo LTR locus. Controls levels of ncRNAs from the solo LTR locus. Seems to function independently of the RdDM pathway. Functions redundantly with RRP6L2 in the regulation of FLC locus. Participates in the maintenance of trimethylated 'Lys-27' (H3K27me3) at FLC locus via the regulation of antisense long non-coding RNAs (lncRNAs) and the regulation of diverse antisense RNAs derived from the FLC locus. Seems not involved in the exosomal RNA degradation. Can complement the growth defect of a yeast mutant lacking RRP6 exonuclease. The sequence is that of Protein RRP6-like 1 from Arabidopsis thaliana (Mouse-ear cress).